Here is a 1266-residue protein sequence, read N- to C-terminus: MGTVIEGKLRFCIDRGGTFTDVYAEIPGHSDGHVLKLLSVDPSNYDDAPVEGIRRILEEYTGKKIPRTSKIPTDKIQWIRMGTTVATNALLERKGERIALCVTKGFKDLLQIGNQARPDIFDLTVAKPSNLYEEVIEVDERVVLALEDDDDDEGSLIKGVSGEFLRVVKPFDGEGLKPLLKGLLDKGISCLAVVLMHSYTYPKHEMDVEKLALEMGFRHVSLSSALTPMVRAVPRGLTATVDAYLTPVIKEYLSGFISKFDDDLGKVNVLFMQSDGGLAPESRFSGHKAVLSGPAGGVVGYSQTLFGLETEKPLIGFDMGGTSTDVSRYDGSYEQVIETQIAGTIIQAPQLDINTVAAGGGSKLKFQFGAFRVGPDSVGAHPGPVCYRKGGELAVTDANLVLGFVIPDYFPSIFGPNEDQPLDVAATREAFEKLAGQINIYRKSQDPSAKDMSVEEIAMGFVSVANETMCRPIRQLTEMKGHETKNHALACFGGAGPQHACAIARSLGMKEVLVHRYCGILSAYGMGLADVIEDAQEPYSAVYGPESLSEVFRRETVLLREVREKLQEQGFGDGNISTETYLNLRYDGTDTAIMVKGKKTGDGSAFDYAAEFLKLFEQEYGFKLQNRNLLICDVRVRGIGVTSILKPRAVEAAPVTPKVERHYKVYFEGGWHDTPLFKLENLGFGHEILGPAIIMNGNSTVIVEPQCKAIITKYGNIKIEVEPATSSVKLAENVADVVQLSIFNHRFMGIAEQMGRTLQRTSISTNIKERLDFSCALFSPDGGLVANAPHVPVHLGAMSSTVRWQLKHWGENLNEGDVLVTNHPCAGGSHLPDITVITPVFDKGKLVFFVASRGHHAEVGGITPGSMPPFSKAIWEEGAAIKAFKVVEKGVFQEEGIVKLLQFPSSDETTTKIPGTRRIQDNLSDLQAQIAANQRGISLIKELIEQYGLGTVQAYMKYVQLNAEEAVREMLKSVANRVSSETPNSRVGNSVTIEEEDYMDDGSIIHLKLTIDADKGEASFDFTGTSPEVYGNWNAPEAVTSAAVIYCLRCLVNVDIPLNQGCLAPVEIRIPAGSFLSPSEKAAVVGGNVLTSQRVTDVVLTAFQACACSQGCMNNLTFGDDTFGYYETIGGGCGAGPTWNGTSGVQCHMTNTRMTDPEIFEQRYPVLLHRFGLRENSGGNGLHKGGDGLVREIEFRKPVVVSILSERRVHSPRGLNGGQNGLRGANYLITKDKRRIYLGGKNTVHVEAGEILQILTPGGGGFGSNI.

It belongs to the oxoprolinase family. As to expression, expressed in roots, stems, leaves, flowers and siliques.

Its subcellular location is the cytoplasm. It catalyses the reaction 5-oxo-L-proline + ATP + 2 H2O = L-glutamate + ADP + phosphate + H(+). Its function is as follows. Catalyzes the cleavage of 5-oxo-L-proline to form L-glutamate coupled to the hydrolysis of ATP to ADP and inorganic phosphate. Acts in the glutathione degradation pathway. The protein is 5-oxoprolinase 1 of Arabidopsis thaliana (Mouse-ear cress).